Consider the following 295-residue polypeptide: Tyrosine recombinase XerD (295 aa).

The Core-binding (CB) domain occupies 1–85 (METIIEEYLK…TIRSFHQFAL (85 aa)). One can recognise a Tyr recombinase domain in the interval 106 to 289 (KLPDVLDVEE…SKTQIRQMYN (184 aa)). Active-site residues include R146, K170, H241, R244, and H267. The active-site O-(3'-phospho-DNA)-tyrosine intermediate is the Y276.

This sequence belongs to the 'phage' integrase family. XerD subfamily. In terms of assembly, forms a cyclic heterotetrameric complex composed of two molecules of XerC and two molecules of XerD.

It localises to the cytoplasm. In terms of biological role, site-specific tyrosine recombinase, which acts by catalyzing the cutting and rejoining of the recombining DNA molecules. The XerC-XerD complex is essential to convert dimers of the bacterial chromosome into monomers to permit their segregation at cell division. It also contributes to the segregational stability of plasmids. This Staphylococcus haemolyticus (strain JCSC1435) protein is Tyrosine recombinase XerD.